Consider the following 154-residue polypeptide: MGLSDGEWQLVLKVWGKVEGDLPGHGQEVLIRLFKTHPETLEKFDKFKGLKTEDEMKASADLKKHGGTVLTALGNILKKKGQHEAELKPLAQSHATKHKISIKFLEYISEAIIHVLQSKHSADFGADAQAAMGKALELFRNDMAAKYKEFGFQG.

The region spanning 2 to 148 is the Globin domain; the sequence is GLSDGEWQLV…FRNDMAAKYK (147 aa). Serine 4 carries the phosphoserine modification. Histidine 65 serves as a coordination point for nitrite. Residue histidine 65 coordinates O2. The residue at position 68 (threonine 68) is a Phosphothreonine. Histidine 94 lines the heme b pocket.

This sequence belongs to the globin family. As to quaternary structure, monomeric.

It localises to the cytoplasm. The protein resides in the sarcoplasm. It catalyses the reaction Fe(III)-heme b-[protein] + nitric oxide + H2O = Fe(II)-heme b-[protein] + nitrite + 2 H(+). The enzyme catalyses H2O2 + AH2 = A + 2 H2O. Monomeric heme protein which primary function is to store oxygen and facilitate its diffusion within muscle tissues. Reversibly binds oxygen through a pentacoordinated heme iron and enables its timely and efficient release as needed during periods of heightened demand. Depending on the oxidative conditions of tissues and cells, and in addition to its ability to bind oxygen, it also has a nitrite reductase activity whereby it regulates the production of bioactive nitric oxide. Under stress conditions, like hypoxia and anoxia, it also protects cells against reactive oxygen species thanks to its pseudoperoxidase activity. The polypeptide is Myoglobin (MB) (Ornithorhynchus anatinus (Duckbill platypus)).